A 218-amino-acid chain; its full sequence is Small ribosomal subunit protein uS3c (218 aa).

The 72-residue stretch at 47–118 folds into the KH type-2 domain; sequence VQKNIRISSG…KLNIAITRIT (72 aa).

It belongs to the universal ribosomal protein uS3 family. In terms of assembly, part of the 30S ribosomal subunit.

The protein localises to the plastid. It is found in the chloroplast. The chain is Small ribosomal subunit protein uS3c (rps3) from Vitis vinifera (Grape).